The sequence spans 244 residues: NAD(P)H-quinone oxidoreductase subunit K (244 aa).

[4Fe-4S] cluster-binding residues include Cys-60, Cys-61, Cys-125, and Cys-156. A compositionally biased stretch (basic and acidic residues) spans Ser-221–Thr-236. Positions Ser-221–Glu-244 are disordered.

It belongs to the complex I 20 kDa subunit family. As to quaternary structure, NDH-1 can be composed of about 15 different subunits; different subcomplexes with different compositions have been identified which probably have different functions. It depends on [4Fe-4S] cluster as a cofactor.

The protein resides in the cellular thylakoid membrane. It catalyses the reaction a plastoquinone + NADH + (n+1) H(+)(in) = a plastoquinol + NAD(+) + n H(+)(out). The catalysed reaction is a plastoquinone + NADPH + (n+1) H(+)(in) = a plastoquinol + NADP(+) + n H(+)(out). Functionally, NDH-1 shuttles electrons from an unknown electron donor, via FMN and iron-sulfur (Fe-S) centers, to quinones in the respiratory and/or the photosynthetic chain. The immediate electron acceptor for the enzyme in this species is believed to be plastoquinone. Couples the redox reaction to proton translocation, and thus conserves the redox energy in a proton gradient. Cyanobacterial NDH-1 also plays a role in inorganic carbon-concentration. This chain is NAD(P)H-quinone oxidoreductase subunit K, found in Prochlorococcus marinus (strain MIT 9312).